The chain runs to 394 residues: ATP phosphoribosyltransferase regulatory subunit (394 aa).

The protein belongs to the class-II aminoacyl-tRNA synthetase family. HisZ subfamily. In terms of assembly, heteromultimer composed of HisG and HisZ subunits.

The protein resides in the cytoplasm. Its pathway is amino-acid biosynthesis; L-histidine biosynthesis; L-histidine from 5-phospho-alpha-D-ribose 1-diphosphate: step 1/9. In terms of biological role, required for the first step of histidine biosynthesis. May allow the feedback regulation of ATP phosphoribosyltransferase activity by histidine. The polypeptide is ATP phosphoribosyltransferase regulatory subunit (Geobacillus thermodenitrificans (strain NG80-2)).